The chain runs to 163 residues: Lipoprotein signal peptidase (163 aa).

A run of 3 helical transmembrane segments spans residues 11 to 31 (ILIA…IATT), 63 to 83 (KMTF…YFFI), and 88 to 108 (YNLF…GNFI). Catalysis depends on residues Asp118 and Asp136. The chain crosses the membrane as a helical span at residues 131–151 (IFNIADSSLTIGVILIIIALL).

The protein belongs to the peptidase A8 family.

It is found in the cell membrane. It catalyses the reaction Release of signal peptides from bacterial membrane prolipoproteins. Hydrolyzes -Xaa-Yaa-Zaa-|-(S,diacylglyceryl)Cys-, in which Xaa is hydrophobic (preferably Leu), and Yaa (Ala or Ser) and Zaa (Gly or Ala) have small, neutral side chains.. The protein operates within protein modification; lipoprotein biosynthesis (signal peptide cleavage). In terms of biological role, this protein specifically catalyzes the removal of signal peptides from prolipoproteins. This Staphylococcus aureus (strain Mu3 / ATCC 700698) protein is Lipoprotein signal peptidase.